We begin with the raw amino-acid sequence, 103 residues long: Histone H4 (103 aa).

Gly residues predominate over residues 1 to 14 (MSGRGKGGKGLGKG). The interval 1-20 (MSGRGKGGKGLGKGGAKRHR) is disordered. Serine 2 is modified (N-acetylserine). Lysine 17 is modified (N6-acetyllysine). The DNA-binding element occupies 17-21 (KRHRK). Lysine 21 is modified (N6-methyllysine).

It belongs to the histone H4 family. The nucleosome is a histone octamer containing two molecules each of H2A, H2B, H3 and H4 assembled in one H3-H4 heterotetramer and two H2A-H2B heterodimers. The octamer wraps approximately 147 bp of DNA.

It is found in the nucleus. The protein localises to the chromosome. Its function is as follows. Core component of nucleosome. Nucleosomes wrap and compact DNA into chromatin, limiting DNA accessibility to the cellular machineries which require DNA as a template. Histones thereby play a central role in transcription regulation, DNA repair, DNA replication and chromosomal stability. DNA accessibility is regulated via a complex set of post-translational modifications of histones, also called histone code, and nucleosome remodeling. This Pyrenomonas salina protein is Histone H4.